We begin with the raw amino-acid sequence, 496 residues long: Ankyrin repeat domain-containing protein 34A (496 aa).

ANK repeat units lie at residues Thr-4–Glu-33, Gln-37–Ile-72, Leu-76–Val-106, and Ala-110–Thr-139. Position 15 is an N5-methylglutamine (Gln-15). Composition is skewed to polar residues over residues Asp-147–Ser-162 and Phe-180–Thr-191. The segment at Asp-147–Ser-473 is disordered. The segment covering Ala-204–Phe-214 has biased composition (basic and acidic residues). The span at Leu-218–Lys-233 shows a compositional bias: pro residues. Basic residues predominate over residues Pro-234–Lys-243. Thr-316 bears the Phosphothreonine mark. Positions Arg-463–Ser-473 are enriched in basic residues.

Belongs to the ANKRD34 family. Methylated at Gln-15 by N6AMT1.

The sequence is that of Ankyrin repeat domain-containing protein 34A (ANKRD34A) from Homo sapiens (Human).